Consider the following 271-residue polypeptide: Neurexophilin-1 (271 aa).

A signal peptide spans 1–21 (MQAACWYVLFLLQPTVYLVTC). Residues 22–97 (ANLTNGGKSE…WDWLRNSTDL (76 aa)) form an II region. Residues asparagine 23, asparagine 68, asparagine 93, asparagine 146, asparagine 156, and asparagine 162 are each glycosylated (N-linked (GlcNAc...) asparagine). The interval 98-176 (QEPRPRAKRR…LVPPTKIVEF (79 aa)) is III. Residues 177 to 185 (DLAQQTVID) form an IV (linker domain) region. The tract at residues 186–271 (AKDSKSFNCR…HSDTPYFPSG (86 aa)) is v (Cys-rich).

It belongs to the neurexophilin family.

Its subcellular location is the secreted. In terms of biological role, may be signaling molecules that resemble neuropeptides and that act by binding to alpha-neurexins and possibly other receptors. This Homo sapiens (Human) protein is Neurexophilin-1 (NXPH1).